We begin with the raw amino-acid sequence, 372 residues long: Phospho-N-acetylmuramoyl-pentapeptide-transferase (372 aa).

The next 10 membrane-spanning stretches (helical) occupy residues 21 to 41, 71 to 91, 98 to 118, 134 to 154, 176 to 196, 211 to 231, 251 to 271, 275 to 295, 300 to 320, and 349 to 369; these read SLTL…MIFG, TPTM…LLWA, VWIL…DDWL, YFWL…IATL, MIPF…YFVI, GLAI…AYVS, VIIV…FNAH, VFMG…IAVM, IAFA…MLQV, and QVVA…LMTL.

It belongs to the glycosyltransferase 4 family. MraY subfamily. Requires Mg(2+) as cofactor.

The protein resides in the cell inner membrane. The enzyme catalyses UDP-N-acetyl-alpha-D-muramoyl-L-alanyl-gamma-D-glutamyl-meso-2,6-diaminopimeloyl-D-alanyl-D-alanine + di-trans,octa-cis-undecaprenyl phosphate = di-trans,octa-cis-undecaprenyl diphospho-N-acetyl-alpha-D-muramoyl-L-alanyl-D-glutamyl-meso-2,6-diaminopimeloyl-D-alanyl-D-alanine + UMP. It participates in cell wall biogenesis; peptidoglycan biosynthesis. Functionally, catalyzes the initial step of the lipid cycle reactions in the biosynthesis of the cell wall peptidoglycan: transfers peptidoglycan precursor phospho-MurNAc-pentapeptide from UDP-MurNAc-pentapeptide onto the lipid carrier undecaprenyl phosphate, yielding undecaprenyl-pyrophosphoryl-MurNAc-pentapeptide, known as lipid I. The chain is Phospho-N-acetylmuramoyl-pentapeptide-transferase from Psychrobacter arcticus (strain DSM 17307 / VKM B-2377 / 273-4).